Consider the following 504-residue polypeptide: MSVQVAAPGSAGLGPERLSPEELVRQTRQVVQGLEALRAEHHGLAGHLAEALAGQGPAAGLEMLEEKQQVVSHSLEAIELGLGEAQVLLALSAHVGALEAEKQRLRSQARRLAQENVWLREELEETQRRLRASEESVAQLEEEKRHLEFLGQLRQYDPPAESQQSESPPRRDSLASLFPSEEEERKGPEAAGAAAAQQGGYEIPARLRTLHNLVIQYAGQGRYEVAVPLCRQALEDLERSSGHCHPDVATMLNILALVYRDQNKYKEATDLLHDALQIREQTLGPEHPAVAATLNNLAVLYGKRGRYREAEPLCQRALEIREKVLGADHPDVAKQLNNLALLCQNQGKFEDVERHYARALSIYEALGGPHDPNVAKTKNNLASAYLKQNKYQQAEELYKEILHKEDLPAPLGAPNTGTAGDAEQALRRSSSLSKIRESIRRGSEKLVSRLRGEAAAGAAGMKRAMSLNTLNVDAPRAPGTQFPSWHLDKAPRTLSASTQDLSPH.

The stretch at 90 to 150 (ALSAHVGALE…EEEKRHLEFL (61 aa)) forms a coiled coil. The interval 153 to 197 (LRQYDPPAESQQSESPPRRDSLASLFPSEEEERKGPEAAGAAAAQ) is disordered. Residues 158–167 (PPAESQQSES) are compositionally biased toward low complexity. Ser173 carries the phosphoserine modification. TPR repeat units lie at residues 207 to 240 (LRTL…LERS), 249 to 282 (ATML…REQT), 291 to 324 (AATL…REKV), 333 to 366 (AKQL…YEAL), and 375 to 408 (AKTK…EDLP). Residues 411–438 (LGAPNTGTAGDAEQALRRSSSLSKIRES) are disordered. Ser466 is modified (phosphoserine). The interval 472–504 (VDAPRAPGTQFPSWHLDKAPRTLSASTQDLSPH) is disordered. Polar residues predominate over residues 494-504 (LSASTQDLSPH). Phosphothreonine is present on Thr498. Position 502 is a phosphoserine (Ser502).

This sequence belongs to the kinesin light chain family. In terms of assembly, oligomer composed of two heavy chains and two light chains. Associates with microtubulin in an ATP-dependent manner. Interacts with KIF5C. Interacts with ODF1. Interacts with LRGUK. Interacts with VDAC2.

The protein localises to the cytoplasm. It is found in the cytoskeleton. Its subcellular location is the mitochondrion. In terms of biological role, kinesin is a microtubule-associated force-producing protein that may play a role in organelle transport. Plays a role during spermiogenesis in the development of the sperm tail midpiece and in the normal function of spermatozoa. May play a role in the formation of the mitochondrial sheath formation in the developing spermatid midpiece. This Homo sapiens (Human) protein is Kinesin light chain 3 (KLC3).